The chain runs to 122 residues: Large ribosomal subunit protein uL14 (122 aa).

It belongs to the universal ribosomal protein uL14 family. In terms of assembly, part of the 50S ribosomal subunit. Forms a cluster with proteins L3 and L19. In the 70S ribosome, L14 and L19 interact and together make contacts with the 16S rRNA in bridges B5 and B8.

Functionally, binds to 23S rRNA. Forms part of two intersubunit bridges in the 70S ribosome. In Rickettsia bellii (strain OSU 85-389), this protein is Large ribosomal subunit protein uL14.